The sequence spans 498 residues: Lysine--tRNA ligase (498 aa).

2 residues coordinate Mg(2+): Glu409 and Glu416.

Belongs to the class-II aminoacyl-tRNA synthetase family. In terms of assembly, homodimer. Mg(2+) is required as a cofactor.

It is found in the cytoplasm. It carries out the reaction tRNA(Lys) + L-lysine + ATP = L-lysyl-tRNA(Lys) + AMP + diphosphate. The polypeptide is Lysine--tRNA ligase (Teredinibacter turnerae (strain ATCC 39867 / T7901)).